Here is a 449-residue protein sequence, read N- to C-terminus: 5'-deoxyadenosine deaminase (449 aa).

Zn(2+) is bound by residues His79 and His81. Substrate-binding residues include Glu108 and His200. His227 serves as a coordination point for Zn(2+). Glu230 and Asp316 together coordinate substrate. Residue Asp316 coordinates Zn(2+).

Belongs to the metallo-dependent hydrolases superfamily. MTA/SAH deaminase family. In terms of assembly, homotetramer. Zn(2+) serves as cofactor.

It carries out the reaction 5'-deoxyadenosine + H2O + H(+) = 5'-deoxyinosine + NH4(+). It catalyses the reaction S-adenosyl-L-homocysteine + H2O + H(+) = S-inosyl-L-homocysteine + NH4(+). The catalysed reaction is S-methyl-5'-thioadenosine + H2O + H(+) = S-methyl-5'-thioinosine + NH4(+). The enzyme catalyses adenosine + H2O + H(+) = inosine + NH4(+). It functions in the pathway amino-acid biosynthesis; S-adenosyl-L-methionine biosynthesis. In terms of biological role, catalyzes the deamination of three SAM-derived enzymatic products, namely 5'-deoxyadenosine, S-adenosyl-L-homocysteine, and 5'-methylthioadenosine, to produce the inosine analogs. Can also deaminate adenosine. The preferred substrate for this enzyme is 5'-deoxyadenosine, but all these substrates are efficiently deaminated. Likely functions in a S-adenosyl-L-methionine (SAM) recycling pathway from S-adenosyl-L-homocysteine (SAH) produced from SAM-dependent methylation reactions. May also be involved in the recycling of 5'-deoxyadenosine, whereupon the 5'-deoxyribose moiety of 5'-deoxyinosine is further metabolized to deoxyhexoses used for the biosynthesis of aromatic amino acids in methanogens. This Methanospirillum hungatei JF-1 (strain ATCC 27890 / DSM 864 / NBRC 100397 / JF-1) protein is 5'-deoxyadenosine deaminase.